Here is a 1378-residue protein sequence, read N- to C-terminus: DNA-directed RNA polymerase subunit beta (1378 aa).

It belongs to the RNA polymerase beta chain family. The RNAP catalytic core consists of 2 alpha, 1 beta, 1 beta' and 1 omega subunit. When a sigma factor is associated with the core the holoenzyme is formed, which can initiate transcription.

The catalysed reaction is RNA(n) + a ribonucleoside 5'-triphosphate = RNA(n+1) + diphosphate. DNA-dependent RNA polymerase catalyzes the transcription of DNA into RNA using the four ribonucleoside triphosphates as substrates. In Campylobacter jejuni (strain RM1221), this protein is DNA-directed RNA polymerase subunit beta.